We begin with the raw amino-acid sequence, 758 residues long: Probable C-mannosyltransferase DPY19L2 (758 aa).

The disordered stretch occupies residues 1–58; that stretch reads MRKQGVSSKRLQSSGRSQSKGRRGASLAREPEVEEEMEKSALGGGKLPRGSWRSSPGR. The Nuclear portion of the chain corresponds to 1–107; the sequence is MRKQGVSSKR…ELQARRFSSR (107 aa). The segment covering 7–18 has biased composition (low complexity); that stretch reads SSKRLQSSGRSQ. A helical membrane pass occupies residues 108-128; the sequence is TTLGIAVFVAILHWLHLVTLF. Over 129–194 the chain is Perinuclear space; the sequence is ENDRHFSHLS…INAIKRFHLY (66 aa). The helical transmembrane segment at 195–215 threads the bilayer; sequence PEVIIASWYCTFMGIMNLFGL. Topologically, residues 216–241 are nuclear; sequence ETKTCWNVTRIEPLNEVQSCEGLGDP. A run of 2 helical transmembrane segments spans residues 242–262 and 263–283; these read ACFY…LFFM and YGAY…CFFF. Residues 284-296 are Nuclear-facing; it reads NHGEATRVMWTPP. The helical transmembrane segment at 297–317 threads the bilayer; that stretch reads LRESFSYPFLVLQMCILTLIL. Residues 318 to 343 are Perinuclear space-facing; the sequence is RTSSNDRRPFIALCLSNVAFMLPWQF. A helical membrane pass occupies residues 344-364; sequence AQFILFTQIASLFPMYVVGYI. The Nuclear portion of the chain corresponds to 365-371; sequence EPSKFQK. The helical transmembrane segment at 372–392 threads the bilayer; sequence IIYMNMISVTLSFILMFGNSM. At 393–422 the chain is on the perinuclear space side; it reads YLSSYYSSSLLMTWAIILKRNEIQKLGVSK. Residues 423-443 form a helical membrane-spanning segment; that stretch reads LNFWLIQGSAWWCGTIILKFL. The Nuclear segment spans residues 444–488; the sequence is TSKILGVSDHIRLSDLIAARILRYTDFDTLIYTCAPEFDFMEKAT. Residues 489–509 form a helical membrane-spanning segment; it reads PLRYTKTLLLPVVMVITCFIF. At 510–533 the chain is on the perinuclear space side; that stretch reads KKTVRDISYVLATNIYLRKQLLEH. A helical transmembrane segment spans residues 534 to 554; that stretch reads SELAFHTLQLLVFTALAILIM. The Nuclear portion of the chain corresponds to 555–758; sequence RLKMFLTPHM…NSVYRVLKVN (204 aa).

Belongs to the dpy-19 family. As to quaternary structure, interacts with FAM209. As to expression, widely expressed with high expression in testis. Not detectable in ejaculated sperm (at protein level).

The protein resides in the nucleus inner membrane. Its function is as follows. Probable C-mannosyltransferase that mediates C-mannosylation of tryptophan residues on target proteins. Functionally, required during spermatogenesis for sperm head elongation and acrosome formation. Also plays a role in acrosome attachment to the nuclear envelope. The sequence is that of Probable C-mannosyltransferase DPY19L2 from Homo sapiens (Human).